The chain runs to 743 residues: Putative cation exchanger C3A12.06c (743 aa).

13 helical membrane passes run 13–33, 109–129, 138–158, 182–202, 213–233, 239–258, 528–548, 551–571, 580–600, 609–629, 649–669, 690–710, and 718–738; these read LILLWCILGIAYILFWTHRIS, FPVLSIIVGWLIFLFITIGIS, LVTISWLLQLPDSVVGVTFLA, IGELLGSAFFIVAIVAGSVCL, FLRDVAFLTGTILLVIMFVLH, IWQSLVMILYYLLYVLFVFF, LRLLQCVFVPFAFVTFSITGG, LYIYAASSVFSILCITALYYY, FLPWVSFIGFVLGIIWISTIA, ALGVIFNLNESILGLTVFAAG, MAMGGVFGGPTLNILIGIGIS, LSITAYFLLACLLLLLIYVPL, and VLGLLLFILYIVGTSTNIVVE.

This sequence belongs to the Ca(2+):cation antiporter (CaCA) (TC 2.A.19) family.

It localises to the endoplasmic reticulum membrane. In terms of biological role, putative cation exchanger. The sequence is that of Putative cation exchanger C3A12.06c from Schizosaccharomyces pombe (strain 972 / ATCC 24843) (Fission yeast).